The primary structure comprises 300 residues: MSARIIDGKAAAARVLEQVSTEVKILKADGIEPALAVILVGNDPASEVYVRNKILRAEEAGIRSLEHRLPAKSSQAQVLALIAELNADDSVNGILLQLPLPSHMEEARALQAIDPGKDVDGFHSENVGGLSQGRSVLTPCTPSGCMHLLEETCGDLSGKHAVVIGRSNIVGKPMAALLLQAHCSVTVVHSRSTDAKALCQLADIVVAAVGRPRMIDASWLKPGAVVIDVGINRIEDQGRSRLVGDIDFDNALSVASAITPVPGGVGPMTIAFLMKNTVTAARQQALAQRSQSEAVCLSTC.

NADP(+) contacts are provided by residues 165 to 167, serine 190, and isoleucine 231; that span reads GRS.

The protein belongs to the tetrahydrofolate dehydrogenase/cyclohydrolase family. Homodimer.

The catalysed reaction is (6R)-5,10-methylene-5,6,7,8-tetrahydrofolate + NADP(+) = (6R)-5,10-methenyltetrahydrofolate + NADPH. It carries out the reaction (6R)-5,10-methenyltetrahydrofolate + H2O = (6R)-10-formyltetrahydrofolate + H(+). It participates in one-carbon metabolism; tetrahydrofolate interconversion. In terms of biological role, catalyzes the oxidation of 5,10-methylenetetrahydrofolate to 5,10-methenyltetrahydrofolate and then the hydrolysis of 5,10-methenyltetrahydrofolate to 10-formyltetrahydrofolate. This chain is Bifunctional protein FolD 2, found in Pseudomonas savastanoi pv. phaseolicola (strain 1448A / Race 6) (Pseudomonas syringae pv. phaseolicola (strain 1448A / Race 6)).